The sequence spans 158 residues: MAKALITYASMSGNTEDIAFIIKDTLQEYELDIDCVEINDMDASCLTSYDYVLIGTYTWGDGDLPYEAEDFFEEVKQIQLNGLKTACFGSGDYSYPKFCEAVNLFNVMLQEAGAAVYQETLKIELAPETDEDVESCRAFARGFLAWADYMNKEKIHVS.

Residues Ala-4–Leu-144 form the Flavodoxin-like domain.

The protein belongs to the flavodoxin family. Requires FMN as cofactor.

Its function is as follows. Low-potential electron donor to a number of redox enzymes. In Bacillus subtilis (strain 168), this protein is Probable flavodoxin 1 (ykuN).